The primary structure comprises 129 residues: Fluoride-specific ion channel FluC (129 aa).

The next 4 helical transmembrane spans lie at 1–21 (MLMK…LGSA), 35–55 (GGLP…IGFI), 71–91 (LFLV…IFEN), and 105–125 (AYLA…TFFA). Na(+)-binding residues include Gly79 and Thr82.

Belongs to the fluoride channel Fluc/FEX (TC 1.A.43) family.

Its subcellular location is the cell inner membrane. It carries out the reaction fluoride(in) = fluoride(out). Na(+) is not transported, but it plays an essential structural role and its presence is essential for fluoride channel function. Functionally, fluoride-specific ion channel. Important for reducing fluoride concentration in the cell, thus reducing its toxicity. The sequence is that of Fluoride-specific ion channel FluC from Chlorobium phaeobacteroides (strain DSM 266 / SMG 266 / 2430).